Reading from the N-terminus, the 190-residue chain is Large ribosomal subunit protein uL10 (190 aa).

It belongs to the universal ribosomal protein uL10 family. As to quaternary structure, part of the ribosomal stalk of the 50S ribosomal subunit. The N-terminus interacts with L11 and the large rRNA to form the base of the stalk. The C-terminus forms an elongated spine to which L12 dimers bind in a sequential fashion forming a multimeric L10(L12)X complex.

Functionally, forms part of the ribosomal stalk, playing a central role in the interaction of the ribosome with GTP-bound translation factors. This is Large ribosomal subunit protein uL10 from Trichodesmium erythraeum (strain IMS101).